The following is a 219-amino-acid chain: Thiamine-phosphate synthase (219 aa).

4-amino-2-methyl-5-(diphosphooxymethyl)pyrimidine-binding positions include 44–48 (QFREK) and Asn79. 2 residues coordinate Mg(2+): Asp80 and Asp99. Ser117 contacts 4-amino-2-methyl-5-(diphosphooxymethyl)pyrimidine. 143–145 (TST) provides a ligand contact to 2-[(2R,5Z)-2-carboxy-4-methylthiazol-5(2H)-ylidene]ethyl phosphate. A 4-amino-2-methyl-5-(diphosphooxymethyl)pyrimidine-binding site is contributed by Lys146. 2-[(2R,5Z)-2-carboxy-4-methylthiazol-5(2H)-ylidene]ethyl phosphate-binding positions include Gly175 and 195 to 196 (IS).

It belongs to the thiamine-phosphate synthase family. Mg(2+) is required as a cofactor.

The enzyme catalyses 2-[(2R,5Z)-2-carboxy-4-methylthiazol-5(2H)-ylidene]ethyl phosphate + 4-amino-2-methyl-5-(diphosphooxymethyl)pyrimidine + 2 H(+) = thiamine phosphate + CO2 + diphosphate. It carries out the reaction 2-(2-carboxy-4-methylthiazol-5-yl)ethyl phosphate + 4-amino-2-methyl-5-(diphosphooxymethyl)pyrimidine + 2 H(+) = thiamine phosphate + CO2 + diphosphate. It catalyses the reaction 4-methyl-5-(2-phosphooxyethyl)-thiazole + 4-amino-2-methyl-5-(diphosphooxymethyl)pyrimidine + H(+) = thiamine phosphate + diphosphate. It functions in the pathway cofactor biosynthesis; thiamine diphosphate biosynthesis; thiamine phosphate from 4-amino-2-methyl-5-diphosphomethylpyrimidine and 4-methyl-5-(2-phosphoethyl)-thiazole: step 1/1. Its function is as follows. Condenses 4-methyl-5-(beta-hydroxyethyl)thiazole monophosphate (THZ-P) and 2-methyl-4-amino-5-hydroxymethyl pyrimidine pyrophosphate (HMP-PP) to form thiamine monophosphate (TMP). The polypeptide is Thiamine-phosphate synthase (Bacillus cereus (strain AH187)).